The sequence spans 127 residues: Adult-specific rigid cuticular protein 12.6 (127 aa).

The region spanning 9–87 (GPAYNFGYNT…ALAALAPKAP (79 aa)) is the Chitin-binding type R&amp;R domain.

Functionally, component of the rigid cuticle of the spider. In Araneus diadematus (European garden spider), this protein is Adult-specific rigid cuticular protein 12.6.